A 425-amino-acid polypeptide reads, in one-letter code: Synaptotagmin-4 (425 aa).

Topologically, residues 1–16 are vesicular; it reads MAPITTSRVEFDEIPT. Residues 17-37 form a helical membrane-spanning segment; it reads VVGIFSAFGLVFTVSLFAWIC. At 38 to 425 the chain is on the cytoplasmic side; that stretch reads CQRRSAKSNK…IAKWHMLCDG (388 aa). The tract at residues 127–147 is disordered; it reads TETEKEANSPESLKSSTSLTS. The residue at position 135 (serine 135) is a Phosphoserine; by MAPK8. Low complexity predominate over residues 137–146; that stretch reads ESLKSSTSLT. C2 domains follow at residues 153–274 and 287–420; these read KLGT…MLMT and GRGE…AKWH. Ca(2+) contacts are provided by aspartate 246, serine 249, and aspartate 252.

This sequence belongs to the synaptotagmin family. Interacts with KIF1A; the interaction increases in presence of calcium and decreases when SYT4 is phosphorylated at Ser-135. It depends on Ca(2+) as a cofactor. Phosphorylation at Ser-135 by MAPK8/JNK1 reduces interaction with KIF1A and neuronal dense core vesicles mobility. As to expression, expressed in many regions of the nervous system but is undetectable in extra neural tissues.

Its subcellular location is the cytoplasmic vesicle. It localises to the secretory vesicle. The protein resides in the neuronal dense core vesicle membrane. In terms of biological role, synaptotagmin family member which does not bind Ca(2+). Plays a role in dendrite formation by melanocytes. Functionally, synaptotagmin family member which does not bind Ca(2+). Involved in neuronal dense core vesicles (DCVs) mobility through its interaction with KIF1A. Upon increased neuronal activity, phosphorylation by MAPK8/JNK1 destabilizes the interaction with KIF1A and captures DCVs to synapses. Plays a role in dendrite formation by melanocytes. This chain is Synaptotagmin-4 (Syt4), found in Mus musculus (Mouse).